We begin with the raw amino-acid sequence, 251 residues long: uncharacterized protein (251 aa).

36-43 (GKQGTGKT) contacts ATP. Residues 230–251 (SDNKTENPSNPSLLTKIDDVTR) are disordered.

This protein may be involved in virus assembly. Essential for virus function. This is an uncharacterized protein from Sulfolobus spindle-shape virus 1 (SSV1).